A 292-amino-acid chain; its full sequence is Cytochrome c1, heme protein, mitochondrial (292 aa).

The transit peptide at 1 to 46 (MFRSFSTAAKQAVKGTYVQRAIVGGAAVVGIGASTMLYADSLTADA) directs the protein to the mitochondrion. At 47–253 (MTAAEHGLHA…SEPEHDERKR (207 aa)) the chain is on the mitochondrial intermembrane side. The Cytochrome c domain maps to 73-226 (SSIRRGYQVY…DLVEYEDGTP (154 aa)). Heme c contacts are provided by Cys-86, Cys-89, and His-90. The interval 117-137 (FEYDDEPDDQGNPKKRPGKLA) is disordered. Position 210 (Met-210) interacts with heme c. A helical membrane pass occupies residues 254–272 (LGLKAMIVLSSLYLLSVWV). Residues 273-292 (KKFKWASIKSRKIVFNPPKK) lie on the Mitochondrial matrix side of the membrane.

Belongs to the cytochrome c family. Component of the ubiquinol-cytochrome c oxidoreductase (cytochrome b-c1 complex, complex III, CIII), a multisubunit enzyme composed of 3 respiratory subunits cytochrome b, cytochrome c1 and Rieske protein, 2 core protein subunits, and additional low-molecular weight protein subunits. The complex exists as an obligatory dimer and forms supercomplexes (SCs) in the inner mitochondrial membrane with cytochrome c oxidase (complex IV, CIV). Requires heme c as cofactor.

It is found in the mitochondrion inner membrane. It catalyses the reaction a quinol + 2 Fe(III)-[cytochrome c](out) = a quinone + 2 Fe(II)-[cytochrome c](out) + 2 H(+)(out). Its function is as follows. Component of the ubiquinol-cytochrome c oxidoreductase, a multisubunit transmembrane complex that is part of the mitochondrial electron transport chain which drives oxidative phosphorylation. The respiratory chain contains 3 multisubunit complexes succinate dehydrogenase (complex II, CII), ubiquinol-cytochrome c oxidoreductase (cytochrome b-c1 complex, complex III, CIII) and cytochrome c oxidase (complex IV, CIV), that cooperate to transfer electrons derived from NADH and succinate to molecular oxygen, creating an electrochemical gradient over the inner membrane that drives transmembrane transport and the ATP synthase. The cytochrome b-c1 complex catalyzes electron transfer from ubiquinol to cytochrome c, linking this redox reaction to translocation of protons across the mitochondrial inner membrane, with protons being carried across the membrane as hydrogens on the quinol. In the process called Q cycle, 2 protons are consumed from the matrix, 4 protons are released into the intermembrane space and 2 electrons are passed to cytochrome c. Cytochrome c1 is a catalytic core subunit containing a c-type heme. It transfers electrons from the [2Fe-2S] iron-sulfur cluster of the Rieske protein to cytochrome c. This is Cytochrome c1, heme protein, mitochondrial (CYT1) from Kluyveromyces lactis (strain ATCC 8585 / CBS 2359 / DSM 70799 / NBRC 1267 / NRRL Y-1140 / WM37) (Yeast).